Consider the following 248-residue polypeptide: MGLSIFLLLCVLGLSQAATPKIFNGTECGRNSQPWQVGLFEGTSLRCGGVLIDHRWVLTAAHCSGSRYWVRLGEHSLSQLDWTEQIRHSGFSVTHPGYLGASTSHEHDLRLLRLRLPVRVTSSVQPLPLPNDCATAGTECHVSGWGITNHPRNPFPDLLQCLNLSIVSHATCHGVYPGRITSNMVCAGGVPGQDACQGDSGGPLVCGGVLQGLVSWGSVGPCGQDGIPGVYTYICKYVDWIRMIMRNN.

The first 17 residues, 1–17 (MGLSIFLLLCVLGLSQA), serve as a signal peptide directing secretion. Residues 22-246 (IFNGTECGRN…YVDWIRMIMR (225 aa)) form the Peptidase S1 domain. N24 is a glycosylation site (N-linked (GlcNAc...) asparagine). 6 cysteine pairs are disulfide-bonded: C28-C161, C47-C63, C133-C235, C140-C206, C172-C186, and C196-C222. Catalysis depends on charge relay system residues H62 and D108. N163 carries N-linked (GlcNAc...) asparagine glycosylation. S200 serves as the catalytic Charge relay system.

This sequence belongs to the peptidase S1 family. Kallikrein subfamily.

It localises to the secreted. The chain is Kallikrein-12 (KLK12) from Homo sapiens (Human).